The chain runs to 589 residues: MFLSLCLMVLALYLLYKWALPKPISSIPYNPPALQSLFGDIPAMIQGTKANNQTHMDWIIQQMKNHESPIIQLFLSPLQRPTVILADFRETQDIMLRRKDFDRSTNIRGLLEDVIPDHHIYEQTNSVFRTHRKLVQDVMLPSFIQKVAGPAFHSNIMRLVRVWDLKAQIADGSPFLATQDIQGAVLDAVYSFAFGSYYKSSTTLPKIEKLEKWNGNAENSSRNAPQSDKPFDFPDVAFDDLINATIDLAKAPQGLQGSPIAKLQAKVTMNMPHFRRVRKIRDDFLRGSLKSAVSKLPSEGGKSDSQAVTSAVEQMVLRETALAQTENRSPNYFSTMMQGELFGLILGGFDTTSTTTLWGLKFLTDNASVQKRLRQALQSSFTKAKAENRSPTFQELAVARIPYLEAVIEEILRCAGATPALQRLAKVDTQILGYHIPKGTDVLFLTHGPSVWTPGFEIDESRRSQTCQAAGEKKDQCWESHDISKFKPERWLGQKLPSNNREKDTDATETAEEFDGLAGPTLAFGLGTRGCFGRRLGYQQLKTSITILIWNFELLPCPQELSSYRTIEGLTSMPEHSYISLAKVDLTTT.

The signal sequence occupies residues 1–21 (MFLSLCLMVLALYLLYKWALP). 4 N-linked (GlcNAc...) asparagine glycosylation sites follow: Asn52, Asn219, Asn243, and Asn366. Heme is bound at residue Cys531.

The protein belongs to the cytochrome P450 family. It depends on heme as a cofactor.

It functions in the pathway sesquiterpene biosynthesis; trichothecene biosynthesis. Cytochrome P450 monooxygenase; part of the core gene cluster that mediates the biosynthesis of trichothecenes, a very large family of chemically related bicyclic sesquiterpene compounds acting as mycotoxins, including T2-toxin. The biosynthesis of trichothecenes begins with the cyclization of farnesyl diphosphate to trichodiene and is catalyzed by the trichodiene synthase TRI5. Trichodiene undergoes a series of oxygenations catalyzed by the cytochrome P450 monooxygenase TRI4. TRI4 controls the addition of four oxygens at C-2, C-3, C-11, and the C-12, C-13-epoxide to form the intermediate isotrichotriol. Isotrichotriol then undergoes a non-enzymatic isomerization and cyclization to form isotrichodermol. During this process, the oxygen at the C-2 position becomes the pyran ring oxygen and the hydroxyl group at C-11 is lost. More complex type A trichothecenes are built by modifying isotrichodermol through a series of paired hydroxylation and acetylation or acylation steps. Isotrichodermol is converted to isotrichodermin by the acetyltransferase TRI101. TRI101 encodes a C-3 transacetylase that acts as a self-protection or resistance factor during biosynthesis and that the presence of a free C-3 hydroxyl group is a key component of Fusarium trichothecene phytotoxicity. A second hydroxyl group is added to C-15 by the trichothecene C-15 hydroxylase TRI11, producing 15-decalonectrin, which is then acetylated by TRI3, producing calonectrin. A third hydroxyl group is added at C-4 by the cytochrome P450 monooxygenase TRI13, converting calonectrin to 3,15-diacetoxyspirpenol, which is subsequently acetylated by the acetyltransferase TRI7. A fourth hydroxyl group is added to C-8 by the cytochrome P450 monooxygenase TRI1, followed by the addition of an isovaleryl moiety by TRI16. Finally, the acetyl group is removed from the C-3 position by the trichothecene C-3 esterase TRI8 to produce T-2 toxin. This chain is Cytochrome P450 monooxygenase TRI13, found in Fusarium sporotrichioides.